We begin with the raw amino-acid sequence, 371 residues long: Alanine racemase (371 aa).

The active-site Proton acceptor; specific for D-alanine is the K39. K39 carries the N6-(pyridoxal phosphate)lysine modification. R137 contacts substrate. Y266 acts as the Proton acceptor; specific for L-alanine in catalysis. M314 provides a ligand contact to substrate.

This sequence belongs to the alanine racemase family. Pyridoxal 5'-phosphate is required as a cofactor.

It catalyses the reaction L-alanine = D-alanine. The protein operates within amino-acid biosynthesis; D-alanine biosynthesis; D-alanine from L-alanine: step 1/1. Functionally, catalyzes the interconversion of L-alanine and D-alanine. May also act on other amino acids. The protein is Alanine racemase (alr) of Desulfovibrio desulfuricans (strain ATCC 27774 / DSM 6949 / MB).